The following is a 299-amino-acid chain: MTVQYPTIADCVGNTPLVRLQRLPGETSNTLLVKLEGNNPAGSVKDRPALSMITRAELRGDIRPGDTLIEATSGNTGIALAMAAAIKGYKMILIMPDNSTAERKAAMTAYGAELILVSKEEGMEGARDLADKLQREGRGKVLDQFANGDNPEAHYHSTGPEIWQQTGGSITHFVSSMGTTGTIMGVSRYLKEQNPAVQIVGLQPMEGSAIPGIRRWPQEYLPKIYDASRVDRVVDMHQDEAEDIMRRLAREEGIFCGVSSGGAVAAMLRLSRELENAVLVAIICDRGDRYLSSGVYDPR.

N6-(pyridoxal phosphate)lysine is present on Lys45. Residues Asn75, 178-182 (GTTGT), and Ser259 contribute to the pyridoxal 5'-phosphate site.

The protein belongs to the cysteine synthase/cystathionine beta-synthase family. Pyridoxal 5'-phosphate is required as a cofactor.

It carries out the reaction O-acetyl-L-serine + hydrogen sulfide = L-cysteine + acetate. Its pathway is amino-acid biosynthesis; L-cysteine biosynthesis; L-cysteine from L-serine: step 2/2. The chain is Cysteine synthase B (cysM) from Pseudomonas aeruginosa (strain ATCC 15692 / DSM 22644 / CIP 104116 / JCM 14847 / LMG 12228 / 1C / PRS 101 / PAO1).